We begin with the raw amino-acid sequence, 440 residues long: Transposon Ty1-LR2 Gag polyprotein (440 aa).

3 stretches are compositionally biased toward polar residues: residues 1 to 23 (MESQ…SVTS), 48 to 60 (TKAN…TPAS), and 127 to 152 (QSQF…GNTF). Disordered stretches follow at residues 1-93 (MESQ…MMTQ), 126-174 (PQSQ…PPPM), and 352-440 (GSRN…PGTY). The span at 153-165 (TDSSSADSDMTST) shows a compositional bias: low complexity. The interval 299 to 401 (NNGIHINNKV…NSKSKTARAH (103 aa)) is RNA-binding. Positions 402–418 (NVSTSNNSPSTDNDSIS) are enriched in low complexity. Serine 416 is subject to Phosphoserine. Residues 419 to 428 (KSTTEPIQLN) are compositionally biased toward polar residues. Residues 429 to 440 (NKHDLHLRPGTY) are compositionally biased toward basic and acidic residues.

In terms of assembly, homotrimer.

The protein localises to the cytoplasm. Functionally, capsid protein (CA) is the structural component of the virus-like particle (VLP), forming the shell that encapsulates the retrotransposons dimeric RNA genome. The particles are assembled from trimer-clustered units and there are holes in the capsid shells that allow for the diffusion of macromolecules. CA also has nucleocapsid-like chaperone activity, promoting primer tRNA(i)-Met annealing to the multipartite primer-binding site (PBS), dimerization of Ty1 RNA and initiation of reverse transcription. This chain is Transposon Ty1-LR2 Gag polyprotein (TY1A-LR2), found in Saccharomyces cerevisiae (strain ATCC 204508 / S288c) (Baker's yeast).